The chain runs to 72 residues: Palustrin-2CG1 (72 aa).

The first 22 residues, 1 to 22, serve as a signal peptide directing secretion; the sequence is MFTMKKPLLLLFFLGTISLSLC. Positions 23–39 are cleaved as a propeptide — removed in mature form; sequence QEERGADEDDGEMTEEV. A disulfide bridge connects residues cysteine 64 and cysteine 70.

In terms of tissue distribution, expressed by the skin glands.

It is found in the secreted. Its function is as follows. Antimicrobial peptide active against a variety of Gram-positive and some Gram-negative bacterial strains. Has antifungal activity against a slime mold isolate. Has hemolytic activity against human erythrocytes. This chain is Palustrin-2CG1, found in Amolops chunganensis (Chungan torrent frog).